A 239-amino-acid polypeptide reads, in one-letter code: Ribonuclease PH (239 aa).

Residues arginine 86 and 124–126 each bind phosphate; that span reads GTR.

The protein belongs to the RNase PH family. As to quaternary structure, homohexameric ring arranged as a trimer of dimers.

The enzyme catalyses tRNA(n+1) + phosphate = tRNA(n) + a ribonucleoside 5'-diphosphate. Phosphorolytic 3'-5' exoribonuclease that plays an important role in tRNA 3'-end maturation. Removes nucleotide residues following the 3'-CCA terminus of tRNAs; can also add nucleotides to the ends of RNA molecules by using nucleoside diphosphates as substrates, but this may not be physiologically important. Probably plays a role in initiation of 16S rRNA degradation (leading to ribosome degradation) during starvation. In Rhizobium etli (strain ATCC 51251 / DSM 11541 / JCM 21823 / NBRC 15573 / CFN 42), this protein is Ribonuclease PH.